The following is an 809-amino-acid chain: Hydrazine synthase subunit alpha (809 aa).

Positions Met-1–Ala-27 are cleaved as a signal peptide. Cys-303 lines the Zn(2+) pocket. 2 residues coordinate heme: Cys-583 and Cys-586. Zn(2+) is bound at residue His-587. Tyr-591, Cys-685, Cys-688, His-689, and His-772 together coordinate heme. Positions Lys-633–Ala-792 constitute a Cytochrome c domain.

Part of the hydrazine synthase complex that forms an elongated dimer of heterotrimers composed of one alpha, one beta and one gamma subunit. Requires heme c as cofactor.

It is found in the anammoxosome. It carries out the reaction hydrazine + 3 Fe(III)-[cytochrome c] + H2O = nitric oxide + 3 Fe(II)-[cytochrome c] + NH4(+) + 2 H(+). It participates in nitrogen metabolism. Component of the hydrazine synthase complex that catalyzes the condensation of nitric oxide (NO) with ammonium to form hydrazine. The alpha subunit catalyzes the second half-reaction, i.e. the condensation of hydroxylamine formed in the active site of the gamma subunit with ammonia, yielding hydrazine. Is involved in anaerobic ammonium oxidation (anammox), a biological process in which nitrite is used as the electron acceptor in the conversion of ammonium to dinitrogen gas (N2) and water; this bacterial process has a major role in the Earth's nitrogen cycle and has been estimated to synthesize up to 50% of the dinitrogen gas emitted into our atmosphere from the oceans. This chain is Hydrazine synthase subunit alpha, found in Kuenenia stuttgartiensis.